The sequence spans 169 residues: Ribosome maturation factor RimM (169 aa).

A PRC barrel domain is found at 97-169; it reads EDEYYWTDLV…IITADWGLDY (73 aa).

The protein belongs to the RimM family. Binds ribosomal protein uS19.

It localises to the cytoplasm. Functionally, an accessory protein needed during the final step in the assembly of 30S ribosomal subunit, possibly for assembly of the head region. Essential for efficient processing of 16S rRNA. May be needed both before and after RbfA during the maturation of 16S rRNA. It has affinity for free ribosomal 30S subunits but not for 70S ribosomes. This chain is Ribosome maturation factor RimM, found in Neisseria meningitidis serogroup C / serotype 2a (strain ATCC 700532 / DSM 15464 / FAM18).